Reading from the N-terminus, the 139-residue chain is Actin-depolymerizing factor 3 (139 aa).

Residues 7-139 (GVAVNDECML…SLDEIKDRAR (133 aa)) enclose the ADF-H domain.

This sequence belongs to the actin-binding proteins ADF family. Expressed in all tissues except pollen.

It is found in the cytoplasm. Functionally, actin-depolymerizing protein. Severs actin filaments (F-actin) and binds to actin monomers. This Zea mays (Maize) protein is Actin-depolymerizing factor 3 (ADF3).